The primary structure comprises 221 residues: Protein Pisl_1005 (221 aa).

The AMMECR1 domain maps to 8–201 (EEGAYLVKLA…EKTPGGEIYE (194 aa)).

The chain is Protein Pisl_1005 from Pyrobaculum islandicum (strain DSM 4184 / JCM 9189 / GEO3).